A 95-amino-acid polypeptide reads, in one-letter code: Small ribosomal subunit protein bS6 (95 aa).

Belongs to the bacterial ribosomal protein bS6 family.

Its function is as follows. Binds together with bS18 to 16S ribosomal RNA. In Oceanobacillus iheyensis (strain DSM 14371 / CIP 107618 / JCM 11309 / KCTC 3954 / HTE831), this protein is Small ribosomal subunit protein bS6.